Reading from the N-terminus, the 302-residue chain is Probable 5-dehydro-4-deoxyglucarate dehydratase (302 aa).

Belongs to the DapA family.

It catalyses the reaction 5-dehydro-4-deoxy-D-glucarate + H(+) = 2,5-dioxopentanoate + CO2 + H2O. The protein operates within carbohydrate acid metabolism; D-glucarate degradation; 2,5-dioxopentanoate from D-glucarate: step 2/2. This Rhizobium rhizogenes (strain K84 / ATCC BAA-868) (Agrobacterium radiobacter) protein is Probable 5-dehydro-4-deoxyglucarate dehydratase.